Reading from the N-terminus, the 178-residue chain is ATP synthase subunit delta (178 aa).

Belongs to the ATPase delta chain family. F-type ATPases have 2 components, F(1) - the catalytic core - and F(0) - the membrane proton channel. F(1) has five subunits: alpha(3), beta(3), gamma(1), delta(1), epsilon(1). F(0) has three main subunits: a(1), b(2) and c(10-14). The alpha and beta chains form an alternating ring which encloses part of the gamma chain. F(1) is attached to F(0) by a central stalk formed by the gamma and epsilon chains, while a peripheral stalk is formed by the delta and b chains.

It localises to the cell inner membrane. F(1)F(0) ATP synthase produces ATP from ADP in the presence of a proton or sodium gradient. F-type ATPases consist of two structural domains, F(1) containing the extramembraneous catalytic core and F(0) containing the membrane proton channel, linked together by a central stalk and a peripheral stalk. During catalysis, ATP synthesis in the catalytic domain of F(1) is coupled via a rotary mechanism of the central stalk subunits to proton translocation. Its function is as follows. This protein is part of the stalk that links CF(0) to CF(1). It either transmits conformational changes from CF(0) to CF(1) or is implicated in proton conduction. The protein is ATP synthase subunit delta of Pseudomonas syringae pv. tomato (strain ATCC BAA-871 / DC3000).